The primary structure comprises 145 residues: Phospholipase A2 phospholipin (145 aa).

An N-terminal signal peptide occupies residues 1–15; sequence MVDLARRCSGSTEGR. Ca(2+) contacts are provided by Trp-24, Gly-26, and Gly-28. Intrachain disulfides connect Cys-25-Cys-46, Cys-45-Cys-84, Cys-52-Cys-77, Cys-75-Cys-116, and Cys-121-Cys-132. Residue His-49 is part of the active site. Asp-50 is a Ca(2+) binding site. A propeptide spanning residues 124-128 is cleaved from the precursor; the sequence is KRSGR.

It belongs to the phospholipase A2 family. Group III subfamily. As to quaternary structure, heterodimer composed of a small subunit and a large subunit; disulfid-linked. Requires Ca(2+) as cofactor. As to expression, expressed by the venom gland.

It is found in the secreted. It catalyses the reaction a 1,2-diacyl-sn-glycero-3-phosphocholine + H2O = a 1-acyl-sn-glycero-3-phosphocholine + a fatty acid + H(+). In terms of biological role, scorpion venom phospholipase A2 (PLA2) that contains enzymatic activity, but does not inhibit ryanodine receptors in contrary to imperatoxin-1, another heterodimer of P.imperator venom. PLA2 catalyzes the calcium-dependent hydrolysis of the 2-acyl groups in 3-sn-phosphoglycerides. The sequence is that of Phospholipase A2 phospholipin from Pandinus imperator (Emperor scorpion).